A 309-amino-acid polypeptide reads, in one-letter code: tRNA uridine(34) hydroxylase (309 aa).

The Rhodanese domain occupies 137–232 (RGDEVVFFDG…YGEKYGDKGL (96 aa)). The Cysteine persulfide intermediate role is filled by Cys192.

The protein belongs to the TrhO family.

It carries out the reaction uridine(34) in tRNA + AH2 + O2 = 5-hydroxyuridine(34) in tRNA + A + H2O. In terms of biological role, catalyzes oxygen-dependent 5-hydroxyuridine (ho5U) modification at position 34 in tRNAs. In Corynebacterium jeikeium (strain K411), this protein is tRNA uridine(34) hydroxylase.